Consider the following 209-residue polypeptide: Small ribosomal subunit protein eS1 (209 aa).

It belongs to the eukaryotic ribosomal protein eS1 family.

The polypeptide is Small ribosomal subunit protein eS1 (Picrophilus torridus (strain ATCC 700027 / DSM 9790 / JCM 10055 / NBRC 100828 / KAW 2/3)).